The chain runs to 277 residues: Large ribosomal subunit protein uL2 (277 aa).

A disordered region spans residues 223-277 (VTMNPVDHPHGGGEGRTSGGRHPVTPWGKPTKGMKTRSNKATDKFIVTSRHKRKK).

Belongs to the universal ribosomal protein uL2 family. As to quaternary structure, part of the 50S ribosomal subunit. Forms a bridge to the 30S subunit in the 70S ribosome.

Its function is as follows. One of the primary rRNA binding proteins. Required for association of the 30S and 50S subunits to form the 70S ribosome, for tRNA binding and peptide bond formation. It has been suggested to have peptidyltransferase activity; this is somewhat controversial. Makes several contacts with the 16S rRNA in the 70S ribosome. The polypeptide is Large ribosomal subunit protein uL2 (Azorhizobium caulinodans (strain ATCC 43989 / DSM 5975 / JCM 20966 / LMG 6465 / NBRC 14845 / NCIMB 13405 / ORS 571)).